Reading from the N-terminus, the 326-residue chain is Phosphatidylinositol:ceramide inositolphosphotransferase (326 aa).

Transmembrane regions (helical) follow at residues 33-53 (LLLAGLVFQYIHGLAARGVHY), 82-102 (SVFTFIFISFLLWSFHPFIYH), 115-135 (VLAFLVASQFLRIITFYSTQL), 169-189 (VLFGCGDLIFSSHMIFTLVFV), 199-219 (RLIKILAWLMAIIQSLLIIAS), and 222-242 (HYSVDVVVAWYTVNLVVFFID). His181 is a catalytic residue. Residues His222 and Asp226 contribute to the active site. The disordered stretch occupies residues 306–326 (MNGKHGEDINHTLSDATPNGT). A compositionally biased stretch (polar residues) spans 316-326 (HTLSDATPNGT).

The protein belongs to the sphingomyelin synthase family.

It localises to the golgi apparatus. The protein localises to the trans-Golgi network membrane. Functionally, catalyzes the transfer of the phosphorylinositol group from phosphatidylinositol (PI) to phytoceramide, an essential step in sphingolipid biosynthesis. May play an important role in modulating plant programmed cell death (PCD) associated with defense (e.g. toward Golovinomyces cichoracearum) by promoting sphingolipid metabolism and regulating ceramide accumulation. In Oryza sativa subsp. indica (Rice), this protein is Phosphatidylinositol:ceramide inositolphosphotransferase (ERH1).